A 24-amino-acid polypeptide reads, in one-letter code: FLPAVLRVAAKVVPTVFCLISKKC.

A disulfide bridge links C18 with C24.

Expressed by the skin glands.

Its subcellular location is the secreted. Has antibacterial activity against E.coli ATCC 25992 (MIC=49 uM), E.coli CIB 84492 (MIC=25 uM), S.aureus ATCC 25923 (MIC=6 uM) and S.aureus CIB 85462 (MIC=3 uM). This chain is Brevinin-1JDc, found in Odorrana jingdongensis (Jingdong frog).